We begin with the raw amino-acid sequence, 167 residues long: MDLQLITTEMVVEAYGDTTDGISVFKGNRRVGYITGLKKDLAKQVKRKTTIKEYRNRRLEQARDMLPDAVEEMKVFLENQLAKYDCEVFINQTQPNVHINSCKCYIIVNPLTGKHRLGISNPNRSASDMAEDVEACFKISKSPAEHHILINGLSQDDIVEVIKTLCM.

Functionally, participates in the host transcription shutoff by causing premature termination of transcription from host DNA. Acts as a site-specific termination factor that abolishes transcript elongation on cytosine-containing DNA but not on the 5-hydroxymethyl cytosine present in the viral DNA. Therefore inhibits as well transcription from other phages that contain cytosine in their DNA. In Enterobacteria phage T4 (Bacteriophage T4), this protein is Protein alc (alc).